Here is a 456-residue protein sequence, read N- to C-terminus: MIKRQKLKYKWMLITTLITFTTILLFCLIIIFFLKDTLRSSEIDEAERSSNDIANLFHSKSLSDISALDLNASLENFQEILIYDDKGRKLIQTSNDNTLAYDNKIDFKHPERIHIQRSHGINYLVITEPIRSKDFSGYSVLVHSLQNYDNLVKSLYIVALAFGLIATIITAGVSYIFSSQITKPIVTMSNKMNQIRRDGFQNKLELTTNYEETDNLIDTFNEMMYQIEESFNQQRQFVEDASHELRTPLQIIQGHLNLIQRWGKKDPAVLEESLNISIEEVNRITKLVEELLLLTKDRVNHNVLECENVDVNSEIQSRVKSLQHLHPDYTFETHLATKPIQLKINRHQFEQLLLIFIDNAMKYDTEHKHIKIVTQLKNKMIMIDITDHGMGIPKADLEFIFDRFYRVDKSRARSQGGNGLGLSIAEKIVQLNGGMIQVESELQKYTTFKISFPVLN.

The next 2 helical transmembrane spans lie at 13–33 and 157–177; these read LITTLITFTTILLFCLIIIFF and IVALAFGLIATIITAGVSYIF. The HAMP domain occupies 179–232; sequence SQITKPIVTMSNKMNQIRRDGFQNKLELTTNYEETDNLIDTFNEMMYQIEESFN. Residues 240 to 456 enclose the Histidine kinase domain; that stretch reads DASHELRTPL…TFKISFPVLN (217 aa). His243 carries the phosphohistidine; by autocatalysis modification.

Post-translationally, autophosphorylated.

The protein resides in the cell membrane. It carries out the reaction ATP + protein L-histidine = ADP + protein N-phospho-L-histidine.. Functionally, member of the two-component regulatory system ArlS/ArlR. ArlS probably functions as a sensor protein kinase which is autophosphorylated at a histidine residue and transfers its phosphate group to ArlR. The sequence is that of Signal transduction histidine-protein kinase ArlS (arlS) from Staphylococcus epidermidis (strain ATCC 12228 / FDA PCI 1200).